The primary structure comprises 117 residues: Large ribosomal subunit protein bL17 (117 aa).

The protein belongs to the bacterial ribosomal protein bL17 family. Part of the 50S ribosomal subunit. Contacts protein L32.

The polypeptide is Large ribosomal subunit protein bL17 (Endomicrobium trichonymphae).